Reading from the N-terminus, the 89-residue chain is Cell division topological specificity factor (89 aa).

The protein belongs to the MinE family.

In terms of biological role, prevents the cell division inhibition by proteins MinC and MinD at internal division sites while permitting inhibition at polar sites. This ensures cell division at the proper site by restricting the formation of a division septum at the midpoint of the long axis of the cell. The chain is Cell division topological specificity factor from Edwardsiella ictaluri (strain 93-146).